A 349-amino-acid chain; its full sequence is Protein O-mannose kinase (349 aa).

The Cytoplasmic segment spans residues 1 to 19 (MGQQHGARNGLTHRELPRG). Residues 20–42 (MGLLLAMALMNVVLYVCLDHLFI) form a helical; Signal-anchor for type II membrane protein membrane-spanning segment. The Lumenal segment spans residues 43–349 (SPGRATEDPR…TVMSQTKEML (307 aa)). N-linked (GlcNAc...) asparagine glycans are attached at residues asparagine 66, asparagine 164, and asparagine 219. The region spanning 80–349 (VRQLKLVGEG…TVMSQTKEML (270 aa)) is the Protein kinase domain.

The protein belongs to the protein kinase superfamily. Ser/Thr protein kinase family. STKL subfamily.

The protein resides in the endoplasmic reticulum membrane. The catalysed reaction is 3-O-[beta-D-GalNAc-(1-&gt;3)-beta-D-GlcNAc-(1-&gt;4)-alpha-D-Man]-L-Thr-[protein] + ATP = 3-O-[beta-D-GalNAc-(1-&gt;3)-beta-D-GlcNAc-(1-&gt;4)-(O-6-P-alpha-D-Man)]-Thr-[protein] + ADP + H(+). In terms of biological role, protein O-mannose kinase that specifically mediates phosphorylation at the 6-position of an O-mannose of the trisaccharide (N-acetylgalactosamine (GalNAc)-beta-1,3-N-acetylglucosamine (GlcNAc)-beta-1,4-mannose) to generate phosphorylated O-mannosyl trisaccharide (N-acetylgalactosamine-beta-1,3-N-acetylglucosamine-beta-1,4-(phosphate-6-)mannose). Phosphorylated O-mannosyl trisaccharide is a carbohydrate structure present in alpha-dystroglycan (DAG1), which is required for binding laminin G-like domain-containing extracellular proteins with high affinity. Only shows kinase activity when the GalNAc-beta-3-GlcNAc-beta-terminus is linked to the 4-position of O-mannose, suggesting that this disaccharide serves as the substrate recognition motif. This chain is Protein O-mannose kinase (Pomk), found in Rattus norvegicus (Rat).